A 343-amino-acid polypeptide reads, in one-letter code: MENITVLGAGSWGTALALVLADNGHRVRLWSHRAEQVREINEQRTNEKYLPGVRLPEVIIGYDDLGAALDGVSIVVLAVPTKAIREVLQRARMCLAAPITIVAVSKGIEPGTHKRVSEIVTEEISEWLEDVVVLSGPSHAEEVVLRHPTTVAVSSPNMEAAQCIQDVFMNHHYFRVYTNPDLVGVEVGGALKNIIALAAGISDGLGYGDNAKAALITRGLAEIARLGCALGANPLTFAGLAGVGDLIVTCTSVHSRNWRAGHMLGQGKKLDDVLESMGMVVEGVRTTKAAYELAKELGVKMPITEVLYEVLFDGKNPKEAVDSLMARGKKQEMNDLMNIFAEQ.

Positions 11, 12, 32, 33, and 106 each coordinate NADPH. Sn-glycerol 3-phosphate contacts are provided by lysine 106, glycine 136, and serine 138. Position 140 (alanine 140) interacts with NADPH. Residues lysine 192, aspartate 245, serine 255, arginine 256, and asparagine 257 each contribute to the sn-glycerol 3-phosphate site. Lysine 192 serves as the catalytic Proton acceptor. Arginine 256 is a binding site for NADPH. Residues valine 280 and glutamate 282 each contribute to the NADPH site.

Belongs to the NAD-dependent glycerol-3-phosphate dehydrogenase family.

It localises to the cytoplasm. It carries out the reaction sn-glycerol 3-phosphate + NAD(+) = dihydroxyacetone phosphate + NADH + H(+). The enzyme catalyses sn-glycerol 3-phosphate + NADP(+) = dihydroxyacetone phosphate + NADPH + H(+). It functions in the pathway membrane lipid metabolism; glycerophospholipid metabolism. In terms of biological role, catalyzes the reduction of the glycolytic intermediate dihydroxyacetone phosphate (DHAP) to sn-glycerol 3-phosphate (G3P), the key precursor for phospholipid synthesis. This Geobacillus thermodenitrificans (strain NG80-2) protein is Glycerol-3-phosphate dehydrogenase [NAD(P)+].